A 533-amino-acid chain; its full sequence is MSPSGKSSRSLANIAGIVAIATLISKVFGLLREQIIAAAFGVGTVVTAYAYAYVIPGFLFILLGGINGPFHSALVSVLSKRDREEAAPLVETVTTLVSGVLLGVTIILVLGAGIFIDLLAPGLEPETRRMAVQQLQIMAPMALLSGLIGIGFGTLNAADQYLLPSISPLLSSITVILGLGVAVWQLGQQLNTEPYWLLGSLLLAGGTTAGAVLQWLAQIVPQAKAGMGKLRLRFNFALPGVKEVLQVMIPATLSSGMLYINFATNLFFASFIPNAAAAMRYGNFVALTPLGIISNMILVPFLPVFSRLADPQDWPELKLRIRQGIMLSALTMFPLTAILVGLAIPIVQVIYERGAFDAEAAAEVAPVLAAYGLGMFFYLGRDVLVRVFYALGDGNSPFKVSLFNIFLNGLLDYLFYKPFGTVGIVMATVGVNLFSMTIFIWMLNRRLAGLSLGGWAMDLGKLVGVTAIASVAGWQGSVLWQRLWGVNSLVENILEVLTMSSIILVVFTVGVALAKVPEVDLLGDRLWKKFKRV.

14 helical membrane passes run 11 to 31 (LANIAGIVAIATLISKVFGLL), 39 to 61 (AFGVGTVVTAYAYAYVIPGFLFI), 96 to 116 (LVSGVLLGVTIILVLGAGIFI), 135 to 155 (LQIMAPMALLSGLIGIGFGTL), 166 to 186 (ISPLLSSITVILGLGVAVWQL), 196 to 216 (WLLGSLLLAGGTTAGAVLQWL), 253 to 273 (LSSGMLYINFATNLFFASFIP), 284 to 304 (FVALTPLGIISNMILVPFLPV), 330 to 350 (LTMFPLTAILVGLAIPIVQVI), 360 to 380 (AAAEVAPVLAAYGLGMFFYLG), 400 to 420 (VSLFNIFLNGLLDYLFYKPFG), 422 to 442 (VGIVMATVGVNLFSMTIFIWM), 452 to 472 (LGGWAMDLGKLVGVTAIASVA), and 493 to 513 (ILEVLTMSSIILVVFTVGVAL).

It belongs to the MurJ/MviN family.

It is found in the cell inner membrane. The protein operates within cell wall biogenesis; peptidoglycan biosynthesis. Involved in peptidoglycan biosynthesis. Transports lipid-linked peptidoglycan precursors from the inner to the outer leaflet of the cytoplasmic membrane. This is Probable lipid II flippase MurJ from Synechocystis sp. (strain ATCC 27184 / PCC 6803 / Kazusa).